We begin with the raw amino-acid sequence, 434 residues long: Trigger factor (434 aa).

The PPIase FKBP-type domain occupies 161–246 (EDRATLDFTG…LKKVEVRELP (86 aa)).

Belongs to the FKBP-type PPIase family. Tig subfamily.

Its subcellular location is the cytoplasm. It catalyses the reaction [protein]-peptidylproline (omega=180) = [protein]-peptidylproline (omega=0). In terms of biological role, involved in protein export. Acts as a chaperone by maintaining the newly synthesized protein in an open conformation. Functions as a peptidyl-prolyl cis-trans isomerase. This is Trigger factor from Yersinia enterocolitica serotype O:8 / biotype 1B (strain NCTC 13174 / 8081).